The following is a 71-amino-acid chain: Small ribosomal subunit protein bS21 (71 aa).

The protein belongs to the bacterial ribosomal protein bS21 family.

The sequence is that of Small ribosomal subunit protein bS21 from Pseudoalteromonas atlantica (strain T6c / ATCC BAA-1087).